We begin with the raw amino-acid sequence, 874 residues long: Probable inorganic carbon transporter subunit DabA (874 aa).

Residues Cys-398, Asp-400, His-580, and Cys-595 each contribute to the Zn(2+) site.

Belongs to the inorganic carbon transporter (TC 9.A.2) DabA family. Forms a complex with DabB. Zn(2+) is required as a cofactor.

The protein resides in the cell membrane. Part of an energy-coupled inorganic carbon pump. The polypeptide is Probable inorganic carbon transporter subunit DabA (Bacillus cereus (strain AH187)).